We begin with the raw amino-acid sequence, 183 residues long: Copper transporter 4 (183 aa).

The tract at residues 1-21 (MAMPMPMPPPGPGGDAPPAPT) is disordered. 2 helical membrane-spanning segments follow: residues 56 to 76 (VGMY…AEAL) and 115 to 135 (LAYL…LAAV).

It belongs to the copper transporter (Ctr) (TC 1.A.56) family. SLC31A subfamily.

It localises to the membrane. Involved in the transport of copper. In Oryza sativa subsp. japonica (Rice), this protein is Copper transporter 4 (COPT4).